A 140-amino-acid chain; its full sequence is Nucleoside diphosphate kinase (140 aa).

ATP is bound by residues K11, F59, R87, T93, R104, and N114. H117 functions as the Pros-phosphohistidine intermediate in the catalytic mechanism.

Belongs to the NDK family. In terms of assembly, homotetramer. The cofactor is Mg(2+).

The protein resides in the cytoplasm. It carries out the reaction a 2'-deoxyribonucleoside 5'-diphosphate + ATP = a 2'-deoxyribonucleoside 5'-triphosphate + ADP. It catalyses the reaction a ribonucleoside 5'-diphosphate + ATP = a ribonucleoside 5'-triphosphate + ADP. Functionally, major role in the synthesis of nucleoside triphosphates other than ATP. The ATP gamma phosphate is transferred to the NDP beta phosphate via a ping-pong mechanism, using a phosphorylated active-site intermediate. This Rickettsia conorii (strain ATCC VR-613 / Malish 7) protein is Nucleoside diphosphate kinase.